The chain runs to 540 residues: Chaperonin GroEL (540 aa).

Residues 29-32 (TLGP), 86-90 (DGTTT), Gly413, and Asp493 each bind ATP. A disordered region spans residues 520–540 (AEKPEPKPAPGPADPGAGMDF).

Belongs to the chaperonin (HSP60) family. As to quaternary structure, forms a cylinder of 14 subunits composed of two heptameric rings stacked back-to-back. Interacts with the co-chaperonin GroES.

Its subcellular location is the cytoplasm. The catalysed reaction is ATP + H2O + a folded polypeptide = ADP + phosphate + an unfolded polypeptide.. Its function is as follows. Together with its co-chaperonin GroES, plays an essential role in assisting protein folding. The GroEL-GroES system forms a nano-cage that allows encapsulation of the non-native substrate proteins and provides a physical environment optimized to promote and accelerate protein folding. The sequence is that of Chaperonin GroEL from Tropheryma whipplei (strain TW08/27) (Whipple's bacillus).